Reading from the N-terminus, the 404-residue chain is Probable tRNA sulfurtransferase (404 aa).

The 106-residue stretch at 60-165 (TAVAESLKQV…EEAAYLSYET (106 aa)) folds into the THUMP domain. ATP-binding positions include 183-184 (ML), 208-209 (HF), R265, G287, and Q296.

Belongs to the ThiI family.

It localises to the cytoplasm. The catalysed reaction is [ThiI sulfur-carrier protein]-S-sulfanyl-L-cysteine + a uridine in tRNA + 2 reduced [2Fe-2S]-[ferredoxin] + ATP + H(+) = [ThiI sulfur-carrier protein]-L-cysteine + a 4-thiouridine in tRNA + 2 oxidized [2Fe-2S]-[ferredoxin] + AMP + diphosphate. It catalyses the reaction [ThiS sulfur-carrier protein]-C-terminal Gly-Gly-AMP + S-sulfanyl-L-cysteinyl-[cysteine desulfurase] + AH2 = [ThiS sulfur-carrier protein]-C-terminal-Gly-aminoethanethioate + L-cysteinyl-[cysteine desulfurase] + A + AMP + 2 H(+). It participates in cofactor biosynthesis; thiamine diphosphate biosynthesis. Catalyzes the ATP-dependent transfer of a sulfur to tRNA to produce 4-thiouridine in position 8 of tRNAs, which functions as a near-UV photosensor. Also catalyzes the transfer of sulfur to the sulfur carrier protein ThiS, forming ThiS-thiocarboxylate. This is a step in the synthesis of thiazole, in the thiamine biosynthesis pathway. The sulfur is donated as persulfide by IscS. The chain is Probable tRNA sulfurtransferase from Streptococcus pneumoniae (strain 70585).